We begin with the raw amino-acid sequence, 235 residues long: Glucosamine-6-phosphate deaminase (235 aa).

Asp62 acts as the Proton acceptor; for enolization step in catalysis. The active-site For ring-opening step is Asn128. The active-site Proton acceptor; for ring-opening step is His130. Glu135 serves as the catalytic For ring-opening step.

It belongs to the glucosamine/galactosamine-6-phosphate isomerase family. NagB subfamily.

The catalysed reaction is alpha-D-glucosamine 6-phosphate + H2O = beta-D-fructose 6-phosphate + NH4(+). It participates in amino-sugar metabolism; N-acetylneuraminate degradation; D-fructose 6-phosphate from N-acetylneuraminate: step 5/5. Its function is as follows. Catalyzes the reversible isomerization-deamination of glucosamine 6-phosphate (GlcN6P) to form fructose 6-phosphate (Fru6P) and ammonium ion. The chain is Glucosamine-6-phosphate deaminase from Streptococcus sanguinis (strain SK36).